A 718-amino-acid chain; its full sequence is Ribosome-releasing factor 2, mitochondrial (718 aa).

Residues M1–Y29 constitute a mitochondrion transit peptide. Positions S31–E310 constitute a tr-type G domain. Residues A40–T47, D104–H108, and N158–D161 contribute to the GTP site.

Belongs to the TRAFAC class translation factor GTPase superfamily. Classic translation factor GTPase family. EF-G/EF-2 subfamily.

Its subcellular location is the mitochondrion. Its function is as follows. Mitochondrial GTPase that mediates the disassembly of ribosomes from messenger RNA at the termination of mitochondrial protein biosynthesis. Not involved in the GTP-dependent ribosomal translocation step during translation elongation. This is Ribosome-releasing factor 2, mitochondrial from Drosophila erecta (Fruit fly).